The sequence spans 1324 residues: MSRRKQAKPQHFQSDPEVASLPRRDGDTEKGQPSRPTKSKDAHVCGRCCAEFFELSDLLLHKKNCTKNQLVLIVNENPASPPETFSPSPPPDNPDEQMNDTVNKTDQVDCSDLSEHNGLDREESMEVEAPVANKSGSGTSSGSHSSTAPSSSSSSSSSSGGGGSSSTGTSAITTSLPQLGDLTTLGNFSVINSNVIIENLQSTKVAVAQFSQEARCGGASGGKLAVPALMEQLLALQQQQIHQLQLIEQIRHQILLLASQNADLPTSSSPSQGTLRTSANPLSTLSSHLSQQLAAAAGLAQSLASQSASISGVKQLPPIQLPQSSSGNTIIPSNSGSSPNMNILAAAVTTPSSEKVASSAGASHVSNPAVSSSSSPAFAISSLLSPASNPLLPQQASANSVFPSPLPNIGTTAEDLNSLSALAQQRKSKPPNVTAFEAKSTSDEAFFKHKCRFCAKVFGSDSALQIHLRSHTGERPFKCNICGNRFSTKGNLKVHFQRHKEKYPHIQMNPYPVPEHLDNIPTSTGIPYGMSIPPEKPVTSWLDTKPVLPTLTTSVGLPLPPTLPSLIPFIKTEEPAPIPISHSATSPPGSVKSDSGGPESATRNLGGLPEEAEGSTLPPSGGKSEESGMVTNSVPTASSSVLSSPAADCGPAGSATTFTNPLLPLMSEQFKAKFPFGGLLDSAQASETSKLQQLVENIDKKATDPNECIICHRVLSCQSALKMHYRTHTGERPFKCKICGRAFTTKGNLKTHYSVHRAMPPLRVQHSCPICQKKFTNAVVLQQHIRMHMGGQIPNTPVPDSYSESMESDTGSFDEKNFDDLDNFSDENMEDCPEGSIPDTPKSADASQDSLSSSPLPLEMSSIAALENQMKMINAGLAEQLQASLKSVENGSIEGDVLTNDSSSVGGDMESQSAGSPAISESTSSMQALSPSNSTQEFHKSPSIEEKPQRAVPSEFANGLSPTPVNGGALDLTSSHAEKIIKEDSLGILFPFRDRGKFKNTACDICGKTFACQSALDIHYRSHTKERPFICTVCNRGFSTKGNLKQHMLTHQMRDLPSQLFEPSSNLGPNQNSAVIPANSLSSLIKTEVNGFVHVSPQDSKDTPTSHVPSGPLSSSATSPVLLPALPRRTPKQHYCNTCGKTFSSSSALQIHERTHTGEKPFACTICGRAFTTKGNLKVHMGTHMWNSTPARRGRRLSVDGPMTFLGGNPVKFPEMFQKDLAARSGSGDPSSFWNQYAAALSNGLAMKANEISVIQNGGIPPIPGSLGSGNSSPVSGLTGNLERLQNSEPNAPLAGLEKMASSENGTNFRFTRFVEDSKEIVTS.

The tract at residues 1 to 42 (MSRRKQAKPQHFQSDPEVASLPRRDGDTEKGQPSRPTKSKDA) is disordered. The span at 22 to 42 (PRRDGDTEKGQPSRPTKSKDA) shows a compositional bias: basic and acidic residues. The C2H2-type 1; atypical zinc-finger motif lies at 43-65 (HVCGRCCAEFFELSDLLLHKKNC). Disordered stretches follow at residues 77–102 (NPAS…NDTV), 108–127 (VDCS…SMEV), 132–172 (ANKS…TSAI), and 317–336 (PPIQ…SNSG). A compositionally biased stretch (basic and acidic residues) spans 113–124 (LSEHNGLDREES). Positions 135–158 (SGSGTSSGSHSSTAPSSSSSSSSS) are enriched in low complexity. Over residues 321-336 (LPQSSSGNTIIPSNSG) the composition is skewed to polar residues. A Glycyl lysine isopeptide (Lys-Gly) (interchain with G-Cter in SUMO2) cross-link involves residue Lys-439. 2 consecutive C2H2-type zinc fingers follow at residues 449–471 (HKCR…LRSH) and 477–499 (FKCN…FQRH). The segment at 577-646 (PIPISHSATS…ASSSVLSSPA (70 aa)) is disordered. Phosphoserine occurs at positions 590, 593, and 595. Residues 633-646 (SVPTASSSVLSSPA) are compositionally biased toward low complexity. Glycyl lysine isopeptide (Lys-Gly) (interchain with G-Cter in SUMO2) cross-links involve residues Lys-673, Lys-690, and Lys-701. 3 C2H2-type zinc fingers span residues 706-728 (NECI…YRTH), 734-756 (FKCK…YSVH), and 766-788 (HSCP…IRMH). Disordered regions lie at residues 790–856 (GGQI…SSPL) and 894–963 (EGDV…LSPT). Positions 802 to 811 (YSESMESDTG) are enriched in polar residues. A compositionally biased stretch (acidic residues) spans 820-833 (DLDNFSDENMEDCP). Residues 843–856 (SADASQDSLSSSPL) show a composition bias toward low complexity. Residues 899-936 (TNDSSSVGGDMESQSAGSPAISESTSSMQALSPSNSTQ) show a composition bias toward polar residues. Over residues 937–949 (EFHKSPSIEEKPQ) the composition is skewed to basic and acidic residues. A phosphoserine mark is found at Ser-941 and Ser-943. Glycyl lysine isopeptide (Lys-Gly) (interchain with G-Cter in SUMO2) cross-links involve residues Lys-947 and Lys-982. 2 consecutive C2H2-type zinc fingers follow at residues 1001-1023 (TACD…YRSH) and 1029-1051 (FICT…MLTH). A Glycyl lysine isopeptide (Lys-Gly) (interchain with G-Cter in SUMO2) cross-link involves residue Lys-1086. The tract at residues 1095-1120 (VSPQDSKDTPTSHVPSGPLSSSATSP) is disordered. Polar residues predominate over residues 1105 to 1119 (TSHVPSGPLSSSATS). 2 consecutive C2H2-type zinc fingers follow at residues 1134–1156 (HYCN…ERTH) and 1162–1184 (FACT…MGTH). Residues Lys-1219, Lys-1299, and Lys-1319 each participate in a glycyl lysine isopeptide (Lys-Gly) (interchain with G-Cter in SUMO2) cross-link.

The protein belongs to the sal C2H2-type zinc-finger protein family. As to quaternary structure, may associate with NuRD histone deacetylase complex (HDAC). Interacts with components of HDAC complex including HDAC1, HDAC2, RBBP4, RBPP7, MTA1 and MTA2. Interacts with CCNQ. Interacts with NSD2 (via PHD-type zinc fingers 1, 2 and 3). Highest levels in kidney. Lower levels in adult brain (enriched in corpus callosum, lower expression in substantia nigra) and liver.

The protein localises to the nucleus. Its function is as follows. Transcriptional repressor involved in organogenesis. Plays an essential role in ureteric bud invasion during kidney development. The sequence is that of Sal-like protein 1 (SALL1) from Homo sapiens (Human).